We begin with the raw amino-acid sequence, 84 residues long: LYR motif-containing protein 4B (84 aa).

The protein belongs to the complex I LYR family.

This chain is LYR motif-containing protein 4B (lyrm4b), found in Salmo salar (Atlantic salmon).